The following is a 339-amino-acid chain: Proto-oncogene serine/threonine-protein kinase mos (339 aa).

In terms of domain architecture, Protein kinase spans 61 to 335 (VCLLHRLGSG…LLQKDLKAFR (275 aa)). ATP contacts are provided by residues 67–75 (LGSGGFGSV) and Lys-88. The active-site Proton acceptor is Asp-196.

This sequence belongs to the protein kinase superfamily. Ser/Thr protein kinase family. In terms of assembly, interacts with MAP2K1/MEK1. In terms of tissue distribution, expressed mainly in gonadal tissues, and cardiac and skeletal muscles.

The protein resides in the cytoplasm. The catalysed reaction is L-seryl-[protein] + ATP = O-phospho-L-seryl-[protein] + ADP + H(+). It carries out the reaction L-threonyl-[protein] + ATP = O-phospho-L-threonyl-[protein] + ADP + H(+). Serine/threonine kinase involved in the regulation of MAPK signaling. Is an activator of the ERK1/2 signaling cascade playing an essential role in the stimulation of oocyte maturation. In Rattus norvegicus (Rat), this protein is Proto-oncogene serine/threonine-protein kinase mos.